The chain runs to 230 residues: uncharacterized protein (230 aa).

Active-site charge relay system residues include Ser124 and His158.

It belongs to the peptidase S51 family.

This is an uncharacterized protein from Bacillus subtilis (strain 168).